The following is a 650-amino-acid chain: Solute carrier family 23 member 2 (650 aa).

Residues Met1–Glu20 show a composition bias toward polar residues. Residues Met1–Gly21 form a disordered region. Topologically, residues Thr9–Tyr110 are cytoplasmic. Ser70 carries the post-translational modification Phosphoserine. Position 75 is a phosphothreonine (Thr75). Residue Ser78 is modified to Phosphoserine. The residue at position 79 (Thr79) is a Phosphothreonine. Ser81 carries the post-translational modification Phosphoserine. A helical membrane pass occupies residues Leu111 to Gly131. At Tyr132–Gln139 the chain is on the extracellular side. Residues Leu140–Cys160 form a helical membrane-spanning segment. Position 161 (Arg161) is a topological domain, cytoplasmic. The helical transmembrane segment at Leu162 to Leu182 threads the bilayer. Residues Asp183–Ala218 are Extracellular-facing. Residues Asn188 and Asn196 are each glycosylated (N-linked (GlcNAc...) asparagine). The helical transmembrane segment at Ile219–Leu239 threads the bilayer. Topologically, residues Lys240–Ala266 are cytoplasmic. Residues Gly267–Ser284 form a helical membrane-spanning segment. The Extracellular portion of the chain corresponds to Gln285–Arg288. The helical intramembrane region spans Asn289–Gly302. Topologically, residues Trp303–Gln309 are extracellular. Residues Leu310–Phe330 traverse the membrane as a helical segment. At Thr331 to Gly371 the chain is on the cytoplasmic side. Residues Leu372 to Ile392 form a helical membrane-spanning segment. The Extracellular segment spans residues Glu393–Arg417. The helical transmembrane segment at Gly418 to Ser438 threads the bilayer. Residues Thr439–Cys461 are Cytoplasmic-facing. The helical transmembrane segment at Gly462–Leu482 threads the bilayer. Residues Pro483–Pro485 are Extracellular-facing. The helical transmembrane segment at Val486–Leu506 threads the bilayer. Residues Gln507–Asn516 lie on the Cytoplasmic side of the membrane. Residues Leu517–Asn537 form a helical membrane-spanning segment. Residues Pro538–Asp547 are Extracellular-facing. A helical membrane pass occupies residues Gln548 to Leu568. Topologically, residues Asp569 to Gly650 are cytoplasmic. Thr649 bears the Phosphothreonine mark.

It belongs to the nucleobase:cation symporter-2 (NCS2) (TC 2.A.40) family. Interacts with CLSTN3. Post-translationally, phosphorylated. As to expression, ubiquitous.

It localises to the cell membrane. It catalyses the reaction L-ascorbate(out) + 2 Na(+)(out) = L-ascorbate(in) + 2 Na(+)(in). In terms of biological role, sodium/ascorbate cotransporter. Mediates electrogenic uptake of vitamin C, with a stoichiometry of 2 Na(+) for each ascorbate. In Homo sapiens (Human), this protein is Solute carrier family 23 member 2 (SLC23A2).